The following is a 75-amino-acid chain: Large ribosomal subunit protein bL28 (75 aa).

The protein belongs to the bacterial ribosomal protein bL28 family.

This chain is Large ribosomal subunit protein bL28, found in Baumannia cicadellinicola subsp. Homalodisca coagulata.